The following is a 172-amino-acid chain: Transmembrane protein 91 (172 aa).

Disordered stretches follow at residues 1–31 (MDSP…RHEL) and 55–83 (PSVS…DWDG). Residues 1–97 (MDSPSLRELQ…SPFLPHDHLG (97 aa)) lie on the Extracellular side of the membrane. Over residues 69-81 (VEDMSSSDSDSDW) the composition is skewed to acidic residues. Residues 98 to 118 (LAVFSMLCCFWPVGIAAFCLA) form a helical membrane-spanning segment. Residues 119 to 139 (QKTNKAWAKGDIQGAGAASRR) lie on the Cytoplasmic side of the membrane. The helical transmembrane segment at 140–160 (AFLLGVLAVGLGVCTYAAALV) threads the bilayer. Residues 161–172 (TLAAYLASRDPP) lie on the Extracellular side of the membrane.

The protein belongs to the CD225/Dispanin family.

It is found in the membrane. The polypeptide is Transmembrane protein 91 (TMEM91) (Homo sapiens (Human)).